The chain runs to 414 residues: uncharacterized protein (414 aa).

The protein belongs to the MG032/MG096/MG288 family.

This is an uncharacterized protein from Mycoplasma genitalium (strain ATCC 33530 / DSM 19775 / NCTC 10195 / G37) (Mycoplasmoides genitalium).